We begin with the raw amino-acid sequence, 1383 residues long: Cell surface hyaluronidase (1383 aa).

A disordered region spans residues 1-76 (MYAAGSRGHS…QRTPSESRKR (76 aa)). Topologically, residues 1-82 (MYAAGSRGHS…SRKRKRHKNT (82 aa)) are cytoplasmic. 3 positions are modified to phosphoserine: Ser10, Ser53, and Ser63. The helical; Signal-anchor for type II membrane protein transmembrane segment at 83 to 103 (FICFAITSFSFFVALAVILGI) threads the bilayer. Residues 104–1383 (SSKYAPDENC…DLLQQALKVL (1280 aa)) lie on the Extracellular side of the membrane. In terms of domain architecture, G8 spans 121–245 (RNWDPGQDSA…QRTSWTMLAR (125 aa)). One can recognise a GG-type lectin 1 domain in the interval 255–412 (GSYAFEKDFS…ISLSGFRVDI (158 aa)). N-linked (GlcNAc...) asparagine glycosylation is present at Asn292. PbH1 repeat units lie at residues 669 to 691 (HPNN…WYLF), 711 to 733 (TPLG…FVDK), and 791 to 812 (GGDI…TFAS). 2 N-linked (GlcNAc...) asparagine glycosylation sites follow: Asn914 and Asn1234. The region spanning 1208–1366 (KSYLPVRFQS…MEEYGCSRTG (159 aa)) is the GG-type lectin 2 domain.

This sequence belongs to the CEMIP family. It depends on Ca(2+) as a cofactor. In terms of tissue distribution, widely expressed. Strongly expressed in endothelial cells in the subcapsular sinus of lymph nodes and in the liver sinusoid, two primary sites implicated in systemic hyaluronan turnover.

It localises to the cell membrane. The enzyme catalyses Random hydrolysis of (1-&gt;4)-linkages between N-acetyl-beta-D-glucosamine and D-glucuronate residues in hyaluronate.. Functionally, cell surface hyaluronidase that mediates the initial cleavage of extracellular high-molecular-weight hyaluronan into intermediate-size hyaluronan of approximately 5 kDa fragments. Very specific to hyaluronan; not able to cleave chondroitin sulfate or dermatan sulfate. Has an essential function in systemic hyaluronan catabolism and turnover and regulates cell adhesion and migration via hyaluronan degradation at focal adhesion sites. Acts as a regulator of angiogenesis and heart morphogenesis by mediating degradation of extracellular hyaluronan, thereby regulating VEGF signaling. The protein is Cell surface hyaluronidase of Mus musculus (Mouse).